A 910-amino-acid chain; its full sequence is DNA mismatch repair protein MutS (910 aa).

The span at Met1–Glu11 shows a compositional bias: basic and acidic residues. The interval Met1–Pro21 is disordered. ATP is bound at residue Gly658–Ser665.

Belongs to the DNA mismatch repair MutS family.

In terms of biological role, this protein is involved in the repair of mismatches in DNA. It is possible that it carries out the mismatch recognition step. This protein has a weak ATPase activity. This Brucella abortus (strain 2308) protein is DNA mismatch repair protein MutS.